The following is a 95-amino-acid chain: Small ribosomal subunit protein uS19 (95 aa).

The tract at residues 76–95 (PTRRFGGHADKKAATKGQVR) is disordered.

This sequence belongs to the universal ribosomal protein uS19 family.

In terms of biological role, protein S19 forms a complex with S13 that binds strongly to the 16S ribosomal RNA. The sequence is that of Small ribosomal subunit protein uS19 from Pseudothermotoga lettingae (strain ATCC BAA-301 / DSM 14385 / NBRC 107922 / TMO) (Thermotoga lettingae).